We begin with the raw amino-acid sequence, 799 residues long: Heat shock protein 90-6, mitochondrial (799 aa).

The transit peptide at 1–48 (MIRLSKRSVSTLLRSGNQSFRIAAAASTSRSSPSATDVKRSDTESRWY) directs the protein to the mitochondrion. Over residues 23-35 (AAAASTSRSSPSA) the composition is skewed to low complexity. The segment at 23–61 (AAAASTSRSSPSATDVKRSDTESRWYSSLTNGQSKNSGS) is disordered. Over residues 46-61 (RWYSSLTNGQSKNSGS) the composition is skewed to polar residues. ATP contacts are provided by residues Glu124, Asn128, Asp170, Met175, 190-191 (SG), 214-219 (QFGVGF), and Thr269. A disordered region spans residues 314–337 (EVEVEDDPTETKKDDQDDQTEKKK). The span at 322–334 (TETKKDDQDDQTE) shows a compositional bias: basic and acidic residues. Arg464 lines the ATP pocket. Residues 766-777 (SPEVQPQQQQMA) are compositionally biased toward polar residues. A disordered region spans residues 766–799 (SPEVQPQQQQMAHSHDAETFEAEVVEPVEVDGKK). Over residues 784 to 799 (TFEAEVVEPVEVDGKK) the composition is skewed to acidic residues.

It belongs to the heat shock protein 90 family. Interacts with P23-1.

Its subcellular location is the mitochondrion. Its function is as follows. Molecular chaperone which stabilizes unfolding protein intermediates and functions as a folding molecular chaperone that assists the non-covalent folding of proteins in an ATP-dependent manner. In Arabidopsis thaliana (Mouse-ear cress), this protein is Heat shock protein 90-6, mitochondrial.